Consider the following 291-residue polypeptide: Small ribosomal subunit protein uS2 (291 aa).

Positions Asn270–Asn291 are disordered.

The protein belongs to the universal ribosomal protein uS2 family.

In Rickettsia bellii (strain OSU 85-389), this protein is Small ribosomal subunit protein uS2.